Reading from the N-terminus, the 363-residue chain is Chorismate synthase (363 aa).

NADP(+) contacts are provided by Arg-48 and Arg-54. Residues 125 to 127 (RSS), 237 to 238 (NA), Gly-277, 292 to 296 (KPTSS), and Arg-318 contribute to the FMN site.

It belongs to the chorismate synthase family. As to quaternary structure, homotetramer. It depends on FMNH2 as a cofactor.

It catalyses the reaction 5-O-(1-carboxyvinyl)-3-phosphoshikimate = chorismate + phosphate. Its pathway is metabolic intermediate biosynthesis; chorismate biosynthesis; chorismate from D-erythrose 4-phosphate and phosphoenolpyruvate: step 7/7. Functionally, catalyzes the anti-1,4-elimination of the C-3 phosphate and the C-6 proR hydrogen from 5-enolpyruvylshikimate-3-phosphate (EPSP) to yield chorismate, which is the branch point compound that serves as the starting substrate for the three terminal pathways of aromatic amino acid biosynthesis. This reaction introduces a second double bond into the aromatic ring system. The polypeptide is Chorismate synthase (Pseudomonas entomophila (strain L48)).